A 186-amino-acid polypeptide reads, in one-letter code: MVSNLQQVVKALKQGQVVAYPTEGVFGLGCDPDNEVAIERLLTIKQRPSDKGLILIAADFQQLQPYLDLTSLSAEQLQRVFATWPGPYTWVMPASARASALVTGYRQTVAVRVSDHPLVQKLCSEYGKPLTSTSANLSGQTECKTVEQVQDQLGSQISVILFGEIGERHRPSEIRDARTEQLLRQG.

One can recognise a YrdC-like domain in the interval 2–186; it reads VSNLQQVVKA…ARTEQLLRQG (185 aa).

This sequence belongs to the SUA5 family. TsaC subfamily.

The protein resides in the cytoplasm. The enzyme catalyses L-threonine + hydrogencarbonate + ATP = L-threonylcarbamoyladenylate + diphosphate + H2O. Functionally, required for the formation of a threonylcarbamoyl group on adenosine at position 37 (t(6)A37) in tRNAs that read codons beginning with adenine. Catalyzes the conversion of L-threonine, HCO(3)(-)/CO(2) and ATP to give threonylcarbamoyl-AMP (TC-AMP) as the acyladenylate intermediate, with the release of diphosphate. This chain is Threonylcarbamoyl-AMP synthase, found in Vibrio vulnificus (strain CMCP6).